A 445-amino-acid chain; its full sequence is Tubby-like F-box protein 8 (445 aa).

The 47-residue stretch at 56-102 folds into the F-box domain; that stretch reads ESRWASLPPELLRDVIRRLEASESTWPSRKDVVSCAAVCKAWREMCK.

The protein belongs to the TUB family. Ubiquitous.

The chain is Tubby-like F-box protein 8 (TULP8) from Oryza sativa subsp. japonica (Rice).